A 199-amino-acid chain; its full sequence is Elongation factor Ts, chloroplastic (199 aa).

It belongs to the EF-Ts family.

It localises to the plastid. It is found in the chloroplast. Associates with the EF-Tu.GDP complex and induces the exchange of GDP to GTP. It remains bound to the aminoacyl-tRNA.EF-Tu.GTP complex up to the GTP hydrolysis stage on the ribosome. This Galdieria sulphuraria (Red alga) protein is Elongation factor Ts, chloroplastic (tsf).